A 519-amino-acid chain; its full sequence is Anthranilate synthase component 1 (519 aa).

L-tryptophan-binding positions include Thr-40 and 293–295 (PYM). 330–331 (GT) contributes to the chorismate binding site. A Mg(2+)-binding site is contributed by Glu-363. Residues Tyr-451, Arg-471, 485 to 487 (GSG), and Gly-487 each bind chorismate. A Mg(2+)-binding site is contributed by Glu-500.

This sequence belongs to the anthranilate synthase component I family. Heterotetramer consisting of two non-identical subunits: a beta subunit (TrpG) and a large alpha subunit (TrpE). Mg(2+) is required as a cofactor.

The enzyme catalyses chorismate + L-glutamine = anthranilate + pyruvate + L-glutamate + H(+). The protein operates within amino-acid biosynthesis; L-tryptophan biosynthesis; L-tryptophan from chorismate: step 1/5. With respect to regulation, feedback inhibited by tryptophan. In terms of biological role, part of a heterotetrameric complex that catalyzes the two-step biosynthesis of anthranilate, an intermediate in the biosynthesis of L-tryptophan. In the first step, the glutamine-binding beta subunit (TrpG) of anthranilate synthase (AS) provides the glutamine amidotransferase activity which generates ammonia as a substrate that, along with chorismate, is used in the second step, catalyzed by the large alpha subunit of AS (TrpE) to produce anthranilate. In the absence of TrpG, TrpE can synthesize anthranilate directly from chorismate and high concentrations of ammonia. This is Anthranilate synthase component 1 (trpE) from Buchnera aphidicola subsp. Diuraphis noxia.